The primary structure comprises 98 residues: DNA-binding protein Fis (98 aa).

The segment at residues 74-93 is a DNA-binding region (H-T-H motif); sequence QTRAATMLGINRGTLRKKLK.

The protein belongs to the transcriptional regulatory Fis family. Homodimer.

In terms of biological role, activates ribosomal RNA transcription. Plays a direct role in upstream activation of rRNA promoters. The chain is DNA-binding protein Fis from Histophilus somni (strain 2336) (Haemophilus somnus).